A 299-amino-acid polypeptide reads, in one-letter code: GTPase Era (299 aa).

The region spanning 5 to 175 is the Era-type G domain; sequence RSGFVCFVGR…TDVLAGKLPP (171 aa). Positions 13–20 are G1; it reads GRPNTGKS. Residue 13–20 coordinates GTP; sequence GRPNTGKS. The interval 39–43 is G2; sequence QTTRH. A G3 region spans residues 60-63; the sequence is DTPG. GTP contacts are provided by residues 60 to 64 and 124 to 127; these read DTPGL and TKID. Residues 124–127 form a G4 region; that stretch reads TKID. A G5 region spans residues 154 to 156; the sequence is VSA. The 80-residue stretch at 206–285 folds into the KH type-2 domain; the sequence is VRDELPHSLA…YLDLRVKIAK (80 aa).

The protein belongs to the TRAFAC class TrmE-Era-EngA-EngB-Septin-like GTPase superfamily. Era GTPase family. In terms of assembly, monomer.

It localises to the cell envelope. The protein resides in the secreted. The protein localises to the cell wall. In terms of biological role, exhibits GTPase activity. Binds RNA but is probably not involved in ribosome assembly in mycobacteria. This Mycobacterium sp. (strain KMS) protein is GTPase Era.